Here is a 359-residue protein sequence, read N- to C-terminus: Malonyl-CoA reductase (359 aa).

16–19 (TGLV) is a binding site for NADP(+). Cys-153 acts as the Acyl-thioester intermediate in catalysis. NADP(+) is bound at residue 183–184 (SG). His-248 acts as the Proton acceptor in catalysis. An NADP(+)-binding site is contributed by 335-336 (NT).

This sequence belongs to the aspartate-semialdehyde dehydrogenase family. In terms of assembly, homodimer and possibly a tetramer. Mg(2+) is required as a cofactor. Mn(2+) serves as cofactor.

It carries out the reaction 3-oxopropanoate + NADP(+) + CoA = malonyl-CoA + NADPH + H(+). Its activity is regulated as follows. Activated by dithioerythritol (5 mM) and inhibited by the thiol-blocking agent iodoacetamide (0.1 mM). Functionally, catalyzes the reduction of malonyl-CoA to malonate semialdehyde, a key step in the 3-hydroxypropanoate and the 3-hydroxypropanoate/4-hydroxybutyrate cycles. Can also use succinyl-CoA and succinate semialdehyde as substrates but at a lower rate than malonyl-CoA. In Sulfurisphaera tokodaii (strain DSM 16993 / JCM 10545 / NBRC 100140 / 7) (Sulfolobus tokodaii), this protein is Malonyl-CoA reductase (mcr).